Here is a 201-residue protein sequence, read N- to C-terminus: Flagellin B1 (201 aa).

Positions 1-11 (MFEQNDDRDRG) are excised as a propeptide.

It belongs to the archaeal flagellin family.

It is found in the archaeal flagellum. Flagellin is the subunit protein which polymerizes to form the filaments of archaeal flagella. In Natrialba magadii (strain ATCC 43099 / DSM 3394 / CCM 3739 / CIP 104546 / IAM 13178 / JCM 8861 / NBRC 102185 / NCIMB 2190 / MS3) (Natronobacterium magadii), this protein is Flagellin B1 (flaB1).